The primary structure comprises 385 residues: 8-amino-7-oxononanoate synthase (385 aa).

Residue Arg21 coordinates substrate. Residue 108 to 109 (GF) coordinates pyridoxal 5'-phosphate. A substrate-binding site is contributed by His133. Residues Ser179, His207, and Thr233 each contribute to the pyridoxal 5'-phosphate site. Lys236 bears the N6-(pyridoxal phosphate)lysine mark. Substrate is bound at residue Thr352.

Belongs to the class-II pyridoxal-phosphate-dependent aminotransferase family. BioF subfamily. In terms of assembly, homodimer. The cofactor is pyridoxal 5'-phosphate.

The enzyme catalyses 6-carboxyhexanoyl-[ACP] + L-alanine + H(+) = (8S)-8-amino-7-oxononanoate + holo-[ACP] + CO2. It participates in cofactor biosynthesis; biotin biosynthesis. Functionally, catalyzes the decarboxylative condensation of pimeloyl-[acyl-carrier protein] and L-alanine to produce 8-amino-7-oxononanoate (AON), [acyl-carrier protein], and carbon dioxide. This chain is 8-amino-7-oxononanoate synthase, found in Salmonella dublin (strain CT_02021853).